The sequence spans 203 residues: Cutinase pbc1 (203 aa).

An N-terminal signal peptide occupies residues 1-18; it reads MKVTALGNTLTGFGQALA. Cysteine 32 and cysteine 107 are oxidised to a cystine. Serine 118 acts as the Nucleophile in catalysis. Cysteine 166 and cysteine 173 are disulfide-bonded. Residue histidine 170 is part of the active site. The Proton donor/acceptor role is filled by histidine 183.

It belongs to the cutinase family. In terms of processing, the 2 disulfide bonds play a critical role in holding the catalytic residues in juxta-position; reduction of the disulfide bridges results in the complete inactivation of the enzyme.

It localises to the secreted. It catalyses the reaction cutin + H2O = cutin monomers.. In terms of biological role, catalyzes the hydrolysis of complex carboxylic polyesters found in the cell wall of plants. Degrades cutin, a macromolecule that forms the structure of the plant cuticle. Allows pathogenic fungi to penetrate through the cuticular barrier into the host plant during the initial stage of fungal infection. The polypeptide is Cutinase pbc1 (Pyrenopeziza brassicae).